A 376-amino-acid chain; its full sequence is MNLSVLLVTLLLLSWTSAEKDLKVRVARSTNDETNLHWVKCGGSVPDGAVSIRNTYVSPARTEYVCKCFCQAGYYSTKDSKCHYPYGTKEMATSTNCYILVNRDNFELLEWKDGYAGSVPDNAVSTCKTNKIYVGKGAYGLGKIEPANHCLYYVWDGAETWTKTYQALTMNKDVIEQAMKDVKYQTEGVTVIKGKPEVMRRSTVNNQHCKEVTKTVTLTKDISTDERWDVTNSVTFGVTTTVTAGIPDVSSASLEISMQATMDFAHGASKTETQSYMVTVSVPVPPKQSCTVSMVAQVNKADIPFTATLIRTYRGGKKTQTTTKGVYRTIQVAETHADVEQCTIIGDAKDCPNASSTITTLRPKLKSKKPAKPAGK.

Residues 1–18 (MNLSVLLVTLLLLSWTSA) form the signal peptide. A propeptide spanning residues 19–27 (EKDLKVRVA) is cleaved from the precursor.

This sequence belongs to the natterin family. Contains 4 disulfide bonds. In terms of tissue distribution, expressed by the venom gland.

It is found in the secreted. With respect to regulation, inhibited by tissue-kallikrein inhibitor TKI and trasylol. Plasma kallikrein inhibitor PKSI527 and classical inhibitors of serine-, metallo-, thiol- or aspartate-peptidases evokes a minor inhibition of the peptide digestion. Its function is as follows. Shows nociceptive, edema-inducing and kininogenase activity with release of kallidin from low molecular weight kininogen. The cleavage occurs at Met-Lys bonds. The chain is Natterin-2 from Thalassophryne nattereri (Copper Joe toadfish).